Consider the following 202-residue polypeptide: Homeobox protein ceh-13 (202 aa).

Disordered regions lie at residues proline 60–glycine 83 and arginine 166–lysine 202. Positions alanine 63–proline 81 are enriched in low complexity. The segment at residues asparagine 114 to glutamate 173 is a DNA-binding region (homeobox). The segment covering threonine 183–serine 194 has biased composition (polar residues).

It localises to the nucleus. The chain is Homeobox protein ceh-13 (ceh-13) from Caenorhabditis elegans.